The sequence spans 92 residues: Probable Fe(2+)-trafficking protein (92 aa).

It belongs to the Fe(2+)-trafficking protein family.

Its function is as follows. Could be a mediator in iron transactions between iron acquisition and iron-requiring processes, such as synthesis and/or repair of Fe-S clusters in biosynthetic enzymes. The polypeptide is Probable Fe(2+)-trafficking protein (Shewanella pealeana (strain ATCC 700345 / ANG-SQ1)).